Reading from the N-terminus, the 546-residue chain is Adenine DNA glycosylase (546 aa).

The segment at 19–51 (RAAVGSGHRKQAASQEGRQKHAKNNSQAKPSAC) is disordered. The Proton donor/acceptor role is filled by glutamate 131. [4Fe-4S] cluster-binding residues include cysteine 287, cysteine 294, cysteine 297, and cysteine 303. The Nudix hydrolase domain occupies 364–495 (PREESSATCV…AMKKVFRVYQ (132 aa)). The short motif at 404–426 (VTWEPSEQLQRKALLQELQRWAG) is the Nudix box element.

Belongs to the Nth/MutY family. [4Fe-4S] cluster is required as a cofactor.

Its subcellular location is the nucleus. It is found in the mitochondrion. It catalyses the reaction Hydrolyzes free adenine bases from 7,8-dihydro-8-oxoguanine:adenine mismatched double-stranded DNA, leaving an apurinic site.. Involved in oxidative DNA damage repair. Initiates repair of A*oxoG to C*G by removing the inappropriately paired adenine base from the DNA backbone. Possesses both adenine and 2-OH-A DNA glycosylase activities. The chain is Adenine DNA glycosylase (MUTYH) from Homo sapiens (Human).